A 395-amino-acid chain; its full sequence is Probable protein arginine N-methyltransferase 6.2 (395 aa).

Gly residues predominate over residues 1–11 (MFAGGADGGNG). The interval 1–37 (MFAGGADGGNGHLPRPRRARRGGGGGGGMGSPPLGPP) is disordered. An SAM-dependent MTase PRMT-type domain is found at 45–390 (DMAYFKAYSH…YFTRDQWYVK (346 aa)). 5 residues coordinate S-adenosyl-L-methionine: His58, Arg67, Gly91, Asp113, and Glu142. Residues Glu156 and Glu165 contribute to the active site. A disordered region spans residues 300–324 (KKQANQCLDGNTQDASPSNKKKKAD). The segment covering 302-317 (QANQCLDGNTQDASPS) has biased composition (polar residues).

It belongs to the class I-like SAM-binding methyltransferase superfamily. Protein arginine N-methyltransferase family. PRMT6 subfamily.

Its function is as follows. Arginine methyltransferase that can both catalyze the formation of omega-N monomethylarginine (MMA) and asymmetrical dimethylarginine (aDMA). This Oryza sativa subsp. indica (Rice) protein is Probable protein arginine N-methyltransferase 6.2 (PRMT6.2).